The primary structure comprises 361 residues: Aromatic amino acid aminotransferase (361 aa).

At Lys-221 the chain carries N6-(pyridoxal phosphate)lysine.

The protein belongs to the class-II pyridoxal-phosphate-dependent aminotransferase family. In terms of assembly, homodimer. It depends on pyridoxal 5'-phosphate as a cofactor.

The enzyme catalyses an aromatic L-alpha-amino acid + 2-oxoglutarate = an aromatic oxo-acid + L-glutamate. Aminotransferase that catalyzes the conversion of aromatic amino acids and 2-oxoglutarate into corresponding aromatic oxo acids and L-glutamate. The protein is Aromatic amino acid aminotransferase of Mycobacterium ulcerans (strain Agy99).